The sequence spans 408 residues: Peptidase T (408 aa).

Residue H78 participates in Zn(2+) binding. D80 is an active-site residue. A Zn(2+)-binding site is contributed by D140. The active-site Proton acceptor is the E174. Zn(2+) is bound by residues E175, D197, and H379.

Belongs to the peptidase M20B family. Zn(2+) serves as cofactor.

The protein localises to the cytoplasm. The catalysed reaction is Release of the N-terminal residue from a tripeptide.. Its function is as follows. Cleaves the N-terminal amino acid of tripeptides. The protein is Peptidase T of Staphylococcus aureus (strain MRSA252).